A 158-amino-acid chain; its full sequence is 2-amino-4-hydroxy-6-hydroxymethyldihydropteridine pyrophosphokinase (158 aa).

Belongs to the HPPK family.

The enzyme catalyses 6-hydroxymethyl-7,8-dihydropterin + ATP = (7,8-dihydropterin-6-yl)methyl diphosphate + AMP + H(+). It functions in the pathway cofactor biosynthesis; tetrahydrofolate biosynthesis; 2-amino-4-hydroxy-6-hydroxymethyl-7,8-dihydropteridine diphosphate from 7,8-dihydroneopterin triphosphate: step 4/4. Functionally, catalyzes the transfer of pyrophosphate from adenosine triphosphate (ATP) to 6-hydroxymethyl-7,8-dihydropterin, an enzymatic step in folate biosynthesis pathway. This is 2-amino-4-hydroxy-6-hydroxymethyldihydropteridine pyrophosphokinase (folK) from Methylorubrum extorquens (strain ATCC 14718 / DSM 1338 / JCM 2805 / NCIMB 9133 / AM1) (Methylobacterium extorquens).